The primary structure comprises 371 residues: 4-hydroxyphenylpyruvate dioxygenase-like protein (371 aa).

VOC domains follow at residues 7-135 and 160-328; these read RLCH…LLQR and HVDH…VFTK. Fe cation-binding residues include histidine 163, histidine 258, and glutamate 339.

This sequence belongs to the 4HPPD family. The cofactor is Fe cation.

The protein localises to the mitochondrion. It carries out the reaction 3-(4-hydroxyphenyl)pyruvate + O2 = (S)-4-hydroxymandelate + CO2. In terms of biological role, iron-dependent dioxygenase that catalyzes the conversion of 4-hydroxyphenylpyruvate (4-HPPA) to 4-hydroxymandelate (4-HMA) in the mitochondria, one of the steps in the biosynthesis of coenzyme Q10 from tyrosine. This Rattus norvegicus (Rat) protein is 4-hydroxyphenylpyruvate dioxygenase-like protein.